A 154-amino-acid polypeptide reads, in one-letter code: Crossover junction endodeoxyribonuclease RuvC (154 aa).

Residues D7, E67, and D139 contribute to the active site. Mg(2+)-binding residues include D7, E67, and D139.

Belongs to the RuvC family. In terms of assembly, homodimer which binds Holliday junction (HJ) DNA. The HJ becomes 2-fold symmetrical on binding to RuvC with unstacked arms; it has a different conformation from HJ DNA in complex with RuvA. In the full resolvosome a probable DNA-RuvA(4)-RuvB(12)-RuvC(2) complex forms which resolves the HJ. The cofactor is Mg(2+).

It is found in the cytoplasm. The catalysed reaction is Endonucleolytic cleavage at a junction such as a reciprocal single-stranded crossover between two homologous DNA duplexes (Holliday junction).. Functionally, the RuvA-RuvB-RuvC complex processes Holliday junction (HJ) DNA during genetic recombination and DNA repair. Endonuclease that resolves HJ intermediates. Cleaves cruciform DNA by making single-stranded nicks across the HJ at symmetrical positions within the homologous arms, yielding a 5'-phosphate and a 3'-hydroxyl group; requires a central core of homology in the junction. The consensus cleavage sequence is 5'-(A/T)TT(C/G)-3'. Cleavage occurs on the 3'-side of the TT dinucleotide at the point of strand exchange. HJ branch migration catalyzed by RuvA-RuvB allows RuvC to scan DNA until it finds its consensus sequence, where it cleaves and resolves the cruciform DNA. The chain is Crossover junction endodeoxyribonuclease RuvC from Parasynechococcus marenigrum (strain WH8102).